Consider the following 115-residue polypeptide: Large ribosomal subunit protein P1 (115 aa).

Positions 56-73 are enriched in low complexity; sequence QAAAAPVPASGGAAAPAE. The disordered stretch occupies residues 56-115; sequence QAAAAPVPASGGAAAPAEGDADEADEADEEAEEEAADDGGDDDDDEDDEASGEGLGELFG. Residues 74 to 106 show a composition bias toward acidic residues; sequence GDADEADEADEEAEEEAADDGGDDDDDEDDEAS.

This sequence belongs to the eukaryotic ribosomal protein P1/P2 family. Part of the 50S ribosomal subunit. Homodimer, it forms part of the ribosomal stalk which helps the ribosome interact with GTP-bound translation factors. Forms a heptameric uL10/P0(P1)2(P1)2(P1)2 complex, where uL10/P0 forms an elongated spine to which the P1 dimers bind in a sequential fashion.

Its function is as follows. Forms part of the ribosomal stalk, playing a central role in the interaction of the ribosome with GTP-bound translation factors. The sequence is that of Large ribosomal subunit protein P1 from Haloarcula marismortui (strain ATCC 43049 / DSM 3752 / JCM 8966 / VKM B-1809) (Halobacterium marismortui).